The chain runs to 520 residues: 3-phosphoshikimate 1-carboxyvinyltransferase, chloroplastic (520 aa).

The transit peptide at 1 to 76 (MAQISSMAQG…RISASVATAE (76 aa)) directs the protein to the chloroplast. The 3-phosphoshikimate site is built by K99, S100, and R104. Residue K99 participates in phosphoenolpyruvate binding. Residues G177 and R207 each coordinate phosphoenolpyruvate. S254, S255, Q256, S282, D407, and K434 together coordinate 3-phosphoshikimate. Q256 provides a ligand contact to phosphoenolpyruvate. Catalysis depends on D407, which acts as the Proton acceptor. Phosphoenolpyruvate-binding residues include R438, R480, and K505.

Belongs to the EPSP synthase family.

It is found in the plastid. Its subcellular location is the chloroplast. The catalysed reaction is 3-phosphoshikimate + phosphoenolpyruvate = 5-O-(1-carboxyvinyl)-3-phosphoshikimate + phosphate. Its pathway is metabolic intermediate biosynthesis; chorismate biosynthesis; chorismate from D-erythrose 4-phosphate and phosphoenolpyruvate: step 6/7. Catalyzes the transfer of the enolpyruvyl moiety of phosphoenolpyruvate (PEP) to the 5-hydroxyl of shikimate-3-phosphate (S3P) to produce enolpyruvyl shikimate-3-phosphate and inorganic phosphate. The protein is 3-phosphoshikimate 1-carboxyvinyltransferase, chloroplastic of Solanum lycopersicum (Tomato).